A 354-amino-acid chain; its full sequence is Rhodopsin (354 aa).

Over 1–36 (MNGTEGPNFYIPMSNKTGVVRSPFEYPQYYLAEPWQ) the chain is Extracellular. N-linked (GlcNAc...) asparagine glycans are attached at residues asparagine 2 and asparagine 15. Residues 37–61 (YSILCAYMFLLILLGFPINFMTLYV) traverse the membrane as a helical segment. Topologically, residues 62 to 73 (TIQHKKLRTPLN) are cytoplasmic. The helical transmembrane segment at 74–96 (YILLNLAFANHFMVLCGFTVTMY) threads the bilayer. Residues 97–110 (SSMNGYFILGATGC) lie on the Extracellular side of the membrane. Cysteine 110 and cysteine 187 are joined by a disulfide. A helical transmembrane segment spans residues 111–133 (YVEGFFATLGGEIALWSLVVLAI). The 'Ionic lock' involved in activated form stabilization signature appears at 134–136 (ERY). Over 134 to 152 (ERYVVVCKPMSNFRFSENH) the chain is Cytoplasmic. Residues 153–173 (AVMGVAFTWIMALSCAVPPLL) form a helical membrane-spanning segment. Over 174–202 (GWSRYIPEGMQCSCGVDYYTLKPEVNNES) the chain is Extracellular. A helical transmembrane segment spans residues 203–224 (FVIYMFVVHFTIPLIIIFFCYG). Residues 225-252 (RLVCTVKEAAAQQQESATTQKAEKEVTR) lie on the Cytoplasmic side of the membrane. Residues 253-274 (MVIIMVVFFLICWVPYASVAFF) traverse the membrane as a helical segment. Residues 275–286 (IFSNQGSEFGPI) are Extracellular-facing. Residues 287–308 (FMTVPAFFAKSSSIYNPVIYIM) traverse the membrane as a helical segment. Lysine 296 bears the N6-(retinylidene)lysine mark. Over 309–354 (LNKQFRNCMITTLCCGKNPFGEDDASSAATSKTEASSVSSSQVSPA) the chain is Cytoplasmic. Residues cysteine 322 and cysteine 323 are each lipidated (S-palmitoyl cysteine). The segment at 331–354 (DDASSAATSKTEASSVSSSQVSPA) is disordered. Over residues 334 to 354 (SSAATSKTEASSVSSSQVSPA) the composition is skewed to low complexity.

It belongs to the G-protein coupled receptor 1 family. Opsin subfamily. Contains one covalently linked retinal chromophore. Upon light absorption, the covalently bound 11-cis-retinal is converted to all-trans-retinal. After hydrolysis of the Schiff base and release of the covalently bound all-trans-retinal, active rhodopsin is regenerated by binding of a fresh molecule of 11-cis-retinal.

It is found in the membrane. Its subcellular location is the cell projection. The protein resides in the cilium. It localises to the photoreceptor outer segment. Functionally, photoreceptor required for image-forming vision at low light intensity. Required for photoreceptor cell viability after birth. Light-induced isomerization of 11-cis to all-trans retinal triggers a conformational change that activates signaling via G-proteins. Subsequent receptor phosphorylation mediates displacement of the bound G-protein alpha subunit by arrestin and terminates signaling. This chain is Rhodopsin (RHO), found in Bufo bufo (European toad).